Reading from the N-terminus, the 308-residue chain is D-alanine--D-alanine ligase (308 aa).

The ATP-grasp domain occupies 104-301; that stretch reads KQIWQGSDLP…FDELCVAILE (198 aa). Residue 130-185 participates in ATP binding; that stretch reads IAELGLPVIIKPVHEGSSVGMSKVEKAEDFAAAIEKATQHDAVVMAEKWITGREFT. Positions 255, 268, and 270 each coordinate Mg(2+).

This sequence belongs to the D-alanine--D-alanine ligase family. Mg(2+) is required as a cofactor. Requires Mn(2+) as cofactor.

It is found in the cytoplasm. The catalysed reaction is 2 D-alanine + ATP = D-alanyl-D-alanine + ADP + phosphate + H(+). It functions in the pathway cell wall biogenesis; peptidoglycan biosynthesis. Functionally, cell wall formation. This Acinetobacter baumannii (strain SDF) protein is D-alanine--D-alanine ligase.